Here is a 482-residue protein sequence, read N- to C-terminus: MPQLPMTDSAPLPTPAPSSPAQPSAQPSLHYHLLGIGGIGMSAFARLLATRGHRVSGCDQNLGAQTAGLEAQGIPVAAGHAAAHVTEEPFGKIDVLVASEAVPKSHPELAAARAAGVEVRPRMALLGELLAAGPSVGVIGTHGKTTTTSMIAVAMYGAGLDPSAFVGGNVPEFGGNARTGTGPFVAEVDESDRGFALLGCETAVFTNAEDDHVGGELATYWSTVEEQHAGFARFVAQSGRVLFCADWPGLDTLCSGAREQLTYGQSAGADYRAVNVRPDESGTTFDVEFRGERLGEARVSLPGTHNVLNGLAALAVTHLYGGDFDRAARALADFHGPGRRWEIKGERGGALVVDDYAHNATKVASAVQAARQTGRRVRVVFQPHRYLRTQQSWPRLADALMDADEVLVLDIAAASETPIEGVHATLITDRMTQGGHPNVHYCPDRAAVVRDLRESAQPGDIIVTMGAGDVYRIAEEVVGGSA.

Residues Met-1–Gln-26 are disordered. Position 140–146 (Gly-140–Thr-146) interacts with ATP.

Belongs to the MurCDEF family.

The protein localises to the cytoplasm. The catalysed reaction is UDP-N-acetyl-alpha-D-muramate + L-alanine + ATP = UDP-N-acetyl-alpha-D-muramoyl-L-alanine + ADP + phosphate + H(+). It participates in cell wall biogenesis; peptidoglycan biosynthesis. Cell wall formation. This is UDP-N-acetylmuramate--L-alanine ligase from Deinococcus radiodurans (strain ATCC 13939 / DSM 20539 / JCM 16871 / CCUG 27074 / LMG 4051 / NBRC 15346 / NCIMB 9279 / VKM B-1422 / R1).